A 457-amino-acid polypeptide reads, in one-letter code: Transcription termination factor Rho (457 aa).

Residues 1-23 (MNTTNKQLTEELNNTESNNDHND) are disordered. The Rho RNA-BD domain maps to 77–152 (LIVGEGVLEV…LKVNRVNFED (76 aa)). Residues 200-205 (GKGQRA), 212-217 (RTGKTV), and arginine 243 each bind ATP.

Belongs to the Rho family. In terms of assembly, homohexamer. The homohexamer assembles into an open ring structure.

Facilitates transcription termination by a mechanism that involves Rho binding to the nascent RNA, activation of Rho's RNA-dependent ATPase activity, and release of the mRNA from the DNA template. This is Transcription termination factor Rho from Rickettsia prowazekii (strain Madrid E).